Here is a 542-residue protein sequence, read N- to C-terminus: Neurofilament light polypeptide (542 aa).

Serine 2 is modified (N-acetylserine). The interval 2–93 (SSFSYEPYFS…KSIRTQEKAQ (92 aa)) is head. Threonine 21 carries an O-linked (GlcNAc) threonine glycan. Arginine 23 is modified (asymmetric dimethylarginine; alternate). At arginine 23 the chain carries Omega-N-methylarginine; alternate. O-linked (GlcNAc) serine glycosylation occurs at serine 27. An Omega-N-methylarginine modification is found at arginine 30. Tyrosine 43 carries the post-translational modification Phosphotyrosine. Residues serine 56, serine 67, and serine 103 each carry the phosphoserine modification. An IF rod domain is found at 90 to 401 (EKAQLQDLND…KLLEGEETRL (312 aa)). The segment at 94–125 (LQDLNDRFASFIERVHELEQQNKVLEAELLVL) is coil 1A. The interval 126–138 (RQKHSEPSRFRAL) is linker 1. The interval 139 to 234 (YEQEIRDLRL…KVHEEEIAEL (96 aa)) is coil 1B. A linker 12 region spans residues 235 to 253 (QAQIQYAQISVEMDVSSKP). The interval 254–272 (DLSAALKDIRAQYEKLAAK) is coil 2A. Positions 273–281 (NMQNAEEWF) are linker 2. Residues 282–397 (KSRFTVLTES…AAYRKLLEGE (116 aa)) are coil 2B. The interval 382–392 (ALDIEIAAYRK) is epitope; recognized by IF-specific monoclonal antibody. Positions 398-444 (ETRLSFTSVGSITSGYSQSSQVFGRSAYSGLQSSSYLMSARAFPAYY) are tail, subdomain A. The tail stretch occupies residues 398–542 (ETRLSFTSVG…GEEQAAKKKD (145 aa)). Residues 445–542 (TSHVQEEQSE…GEEQAAKKKD (98 aa)) form a tail, subdomain B (acidic) region. The disordered stretch occupies residues 451–542 (EQSEVEETIE…GEEQAAKKKD (92 aa)). Serine 453 is modified (phosphoserine). Residues 460–471 (EATKAEEAKDEP) are compositionally biased toward basic and acidic residues. Positions 472-527 (PSEGEAEEEEKEKEEGEEEEGAEEEEAAKDESEDAKEEEGGEGEEEDTKESEEEEK) are enriched in acidic residues. Serine 473 and serine 503 each carry phosphoserine. Threonine 519 is modified (phosphothreonine). Residues serine 522 and serine 531 each carry the phosphoserine modification. Over residues 528-542 (KEESAGEEQAAKKKD) the composition is skewed to basic and acidic residues.

The protein belongs to the intermediate filament family. As to quaternary structure, forms homodimers (in vitro). Forms heterodimers with NEFH or NEFM; which can further hetero-oligomerize (in vitro). Forms heterodimers with INA (in vitro). Interacts with ARHGEF28. Interacts with TRIM2. O-glycosylated; contains three N-acetylglucosamine side chains. Post-translationally, phosphorylated in the head and rod regions by the PKC kinase PKN1, leading to the inhibition of polymerization. In terms of processing, ubiquitinated in the presence of TRIM2 and UBE2D1. Expressed in the dorsal root ganglion neurons (at protein level).

It is found in the cell projection. The protein localises to the axon. It localises to the cytoplasm. Its subcellular location is the cytoskeleton. Its function is as follows. Neurofilaments usually contain three intermediate filament proteins: NEFL, NEFM, and NEFH which are involved in the maintenance of neuronal caliber. May additionally cooperate with the neuronal intermediate filament proteins PRPH and INA to form neuronal filamentous networks. The sequence is that of Neurofilament light polypeptide (Nefl) from Rattus norvegicus (Rat).